The following is a 197-amino-acid chain: Probable molybdenum cofactor guanylyltransferase (197 aa).

GTP contacts are provided by residues 9 to 11 (LAG), Lys21, Asp65, and Asp94. Asp94 is a Mg(2+) binding site.

The protein belongs to the MobA family. Mg(2+) is required as a cofactor.

It is found in the cytoplasm. The enzyme catalyses Mo-molybdopterin + GTP + H(+) = Mo-molybdopterin guanine dinucleotide + diphosphate. In terms of biological role, transfers a GMP moiety from GTP to Mo-molybdopterin (Mo-MPT) cofactor (Moco or molybdenum cofactor) to form Mo-molybdopterin guanine dinucleotide (Mo-MGD) cofactor. In Carboxydothermus hydrogenoformans (strain ATCC BAA-161 / DSM 6008 / Z-2901), this protein is Probable molybdenum cofactor guanylyltransferase.